A 355-amino-acid chain; its full sequence is Mitochondrial import inner membrane translocase subunit TIM50 (355 aa).

A mitochondrion-targeting transit peptide spans 1–44 (MAASAAVFLRLRSGLRQGARGLCARLATPPPRAPDQAAEIGSRA). The segment at 25–61 (RLATPPPRAPDQAAEIGSRAGTKAQTQGPQQQRSSEG) is disordered. The Mitochondrial matrix portion of the chain corresponds to 45 to 67 (GTKAQTQGPQQQRSSEGPSYAKK). The span at 47-61 (KAQTQGPQQQRSSEG) shows a compositional bias: polar residues. A helical membrane pass occupies residues 68–88 (VALWLARLLGAGGTVSVIYIF). Topologically, residues 89–355 (GNNAVDENGA…SRLWPRSKQP (267 aa)) are mitochondrial intermembrane. In terms of domain architecture, FCP1 homology spans 145–288 (YYQPPYTLVL…LDLSAFLKTI (144 aa)). Position 343 is a phosphoserine (S343).

The protein belongs to the TIM50 family. Component of the TIM23 complex at least composed of TIMM23, TIMM17 (TIMM17A or TIMM17B) and TIMM50; within this complex, directly interacts with TIMM23. The complex interacts with the TIMM44 component of the PAM complex and with DNAJC15.

It is found in the mitochondrion inner membrane. Essential component of the TIM23 complex, a complex that mediates the translocation of transit peptide-containing proteins across the mitochondrial inner membrane. Has some phosphatase activity in vitro; however such activity may not be relevant in vivo. The polypeptide is Mitochondrial import inner membrane translocase subunit TIM50 (TIMM50) (Bos taurus (Bovine)).